Here is a 263-residue protein sequence, read N- to C-terminus: 3-methyl-2-oxobutanoate hydroxymethyltransferase (263 aa).

Asp-45 and Asp-84 together coordinate Mg(2+). Residues Asp-45–Ser-46, Asp-84, and Lys-112 each bind 3-methyl-2-oxobutanoate. Position 114 (Glu-114) interacts with Mg(2+). Catalysis depends on Glu-181, which acts as the Proton acceptor.

It belongs to the PanB family. As to quaternary structure, homodecamer; pentamer of dimers. The cofactor is Mg(2+).

Its subcellular location is the cytoplasm. The enzyme catalyses 3-methyl-2-oxobutanoate + (6R)-5,10-methylene-5,6,7,8-tetrahydrofolate + H2O = 2-dehydropantoate + (6S)-5,6,7,8-tetrahydrofolate. It participates in cofactor biosynthesis; (R)-pantothenate biosynthesis; (R)-pantoate from 3-methyl-2-oxobutanoate: step 1/2. In terms of biological role, catalyzes the reversible reaction in which hydroxymethyl group from 5,10-methylenetetrahydrofolate is transferred onto alpha-ketoisovalerate to form ketopantoate. This is 3-methyl-2-oxobutanoate hydroxymethyltransferase from Buchnera aphidicola subsp. Schizaphis graminum (strain Sg).